The following is a 520-amino-acid chain: GMP synthase [glutamine-hydrolyzing] (520 aa).

Residues 9-202 enclose the Glutamine amidotransferase type-1 domain; the sequence is TILIIDFGSQ…VHRIVGVKPG (194 aa). Cys86 acts as the Nucleophile in catalysis. Residues His176 and Glu178 contribute to the active site. The GMPS ATP-PPase domain maps to 203-395; that stretch reads WTMGAYREQA…LGLPDSFIGR (193 aa). Position 230–236 (230–236) interacts with ATP; sequence SGGVDSS.

As to quaternary structure, homodimer.

The enzyme catalyses XMP + L-glutamine + ATP + H2O = GMP + L-glutamate + AMP + diphosphate + 2 H(+). It participates in purine metabolism; GMP biosynthesis; GMP from XMP (L-Gln route): step 1/1. Its function is as follows. Catalyzes the synthesis of GMP from XMP. In Brucella canis (strain ATCC 23365 / NCTC 10854 / RM-666), this protein is GMP synthase [glutamine-hydrolyzing].